A 428-amino-acid chain; its full sequence is MSIIEQVGAREILDSRGNPTVEVEVLLDDGSFARAAVPSGASTGEHEAVELRDGGDRYNGKGVEKAVEAVLSEIAPAIIGIDATEQRTVDQALLDADGTPDKSRLGANALLGASLAVARAAAESSGLDLFRYVGGPNAHVLPVPMMNILNGGAHADTGVDVQEFMVAPIGAATFKESLRWGAEVYHALKSVLKEKGLATGLGDEGGFAPDVAGTKEALDLISLAVGKTGLVLGTDVALALDVAATEFYTDGTGYKFEGSNRTADEMAAFYAELVDAYPIVSIEDPLDEDDWDGWVALTDQIGNKVQLVGDDLFVTNPERLEEGIVKGAANALLVKVNQIGTLTETLDAVDLAHRNGYKTMMSHRSGETEDTTIADLAVAVGSGQIKTGAPARSERVAKYNQLLRIEENLGDAARYAGEVAFPRFAFEG.

Q162 contributes to the (2R)-2-phosphoglycerate binding site. The active-site Proton donor is E204. Residues D241, E283, and D310 each coordinate Mg(2+). 4 residues coordinate (2R)-2-phosphoglycerate: K335, R364, S365, and K386. K335 serves as the catalytic Proton acceptor.

It belongs to the enolase family. Mg(2+) serves as cofactor.

It localises to the cytoplasm. Its subcellular location is the secreted. It is found in the cell surface. It catalyses the reaction (2R)-2-phosphoglycerate = phosphoenolpyruvate + H2O. It participates in carbohydrate degradation; glycolysis; pyruvate from D-glyceraldehyde 3-phosphate: step 4/5. Its function is as follows. Catalyzes the reversible conversion of 2-phosphoglycerate (2-PG) into phosphoenolpyruvate (PEP). It is essential for the degradation of carbohydrates via glycolysis. The polypeptide is Enolase (Rhodococcus opacus (strain B4)).